We begin with the raw amino-acid sequence, 699 residues long: Long-chain-fatty-acid--CoA ligase 1 (699 aa).

N-acetylmethionine is present on M1. At Y9 the chain carries 3'-nitrotyrosine. The chain crosses the membrane as a helical; Signal-anchor for type III membrane protein span at residues 25–45 (LPTNTLMGFGAFAALTTFWYA). Over 46 to 699 (TRPKALKPPC…IDELYATIKI (654 aa)) the chain is Cytoplasmic. At Y85 the chain carries Phosphotyrosine. Y86 carries the post-translational modification 3'-nitrotyrosine. S136 carries an O-linked (GlcNAc) serine glycan. N6-acetyllysine occurs at positions 208, 357, and 387. S621 carries the phosphoserine modification. The residue at position 633 (K633) is an N6-acetyllysine.

It belongs to the ATP-dependent AMP-binding enzyme family. Mg(2+) is required as a cofactor.

The protein resides in the mitochondrion outer membrane. Its subcellular location is the peroxisome membrane. The protein localises to the microsome membrane. It is found in the endoplasmic reticulum membrane. It carries out the reaction a long-chain fatty acid + ATP + CoA = a long-chain fatty acyl-CoA + AMP + diphosphate. The catalysed reaction is (5Z,8Z,11Z,14Z)-eicosatetraenoate + ATP + CoA = (5Z,8Z,11Z,14Z)-eicosatetraenoyl-CoA + AMP + diphosphate. The enzyme catalyses 3,7,11,15-tetramethylhexadecanoate + ATP + CoA = phytanoyl-CoA + AMP + diphosphate. It catalyses the reaction hexadecanoate + ATP + CoA = hexadecanoyl-CoA + AMP + diphosphate. It carries out the reaction (E)-hexadec-2-enoate + ATP + CoA = (2E)-hexadecenoyl-CoA + AMP + diphosphate. The catalysed reaction is 2,6,10,14-tetramethylpentadecanoate + ATP + CoA = pristanoyl-CoA + AMP + diphosphate. The enzyme catalyses 14,15-epoxy-(5Z,8Z,11Z)-eicosatrienoate + ATP + CoA = 14,15-epoxy-(5Z,8Z,11Z)-eicosatrienoyl-CoA + AMP + diphosphate. It catalyses the reaction 5-hydroxy-(6E,8Z,11Z,14Z)-eicosatetraenoate + ATP + CoA = 5-hydroxy-(6E,8Z,11Z,14Z)-eicosatetraenoyl-CoA + AMP + diphosphate. It carries out the reaction 12-hydroxy-(5Z,8Z,10E,14Z)-eicosatetraenoate + ATP + CoA = 12-hydroxy-(5Z,8Z,10E,14Z)-eicosatetraenoyl-CoA + AMP + diphosphate. The catalysed reaction is 15-hydroxy-(5Z,8Z,11Z,13E)-eicosatetraenoate + ATP + CoA = 15-hydroxy-(5Z,8Z,11Z,13E)-eicosatetraenoyl-CoA + AMP + diphosphate. The enzyme catalyses (9Z)-octadecenoate + ATP + CoA = (9Z)-octadecenoyl-CoA + AMP + diphosphate. With respect to regulation, inhibited at high temperature and by arachidonate. In terms of biological role, catalyzes the conversion of long-chain fatty acids to their active form acyl-CoAs for both synthesis of cellular lipids, and degradation via beta-oxidation. Preferentially uses palmitoleate, oleate and linoleate. Preferentially activates arachidonate than epoxyeicosatrienoic acids (EETs) or hydroxyeicosatrienoic acids (HETEs). In Mus musculus (Mouse), this protein is Long-chain-fatty-acid--CoA ligase 1.